Here is a 354-residue protein sequence, read N- to C-terminus: Histidinol-phosphate aminotransferase (354 aa).

Lys-222 is modified (N6-(pyridoxal phosphate)lysine).

The protein belongs to the class-II pyridoxal-phosphate-dependent aminotransferase family. Histidinol-phosphate aminotransferase subfamily. As to quaternary structure, homodimer. It depends on pyridoxal 5'-phosphate as a cofactor.

It carries out the reaction L-histidinol phosphate + 2-oxoglutarate = 3-(imidazol-4-yl)-2-oxopropyl phosphate + L-glutamate. The protein operates within amino-acid biosynthesis; L-histidine biosynthesis; L-histidine from 5-phospho-alpha-D-ribose 1-diphosphate: step 7/9. In Staphylococcus carnosus (strain TM300), this protein is Histidinol-phosphate aminotransferase.